The sequence spans 178 residues: Cytochrome b6-f complex iron-sulfur subunit (178 aa).

Residues 20 to 42 form a helical membrane-spanning segment; it reads LLTFGTATGVALGALYPVANFFM. Positions 71-161 constitute a Rieske domain; sequence NHPAGDRSLV…IDIDDDNVLV (91 aa). Positions 107, 109, 125, and 128 each coordinate [2Fe-2S] cluster. A disulfide bond links Cys-112 and Cys-127.

Belongs to the Rieske iron-sulfur protein family. The 4 large subunits of the cytochrome b6-f complex are cytochrome b6, subunit IV (17 kDa polypeptide, PetD), cytochrome f and the Rieske protein, while the 4 small subunits are PetG, PetL, PetM and PetN. The complex functions as a dimer. It depends on [2Fe-2S] cluster as a cofactor.

The protein resides in the cellular thylakoid membrane. It carries out the reaction 2 oxidized [plastocyanin] + a plastoquinol + 2 H(+)(in) = 2 reduced [plastocyanin] + a plastoquinone + 4 H(+)(out). Its function is as follows. Component of the cytochrome b6-f complex, which mediates electron transfer between photosystem II (PSII) and photosystem I (PSI), cyclic electron flow around PSI, and state transitions. In Prochlorococcus marinus (strain SARG / CCMP1375 / SS120), this protein is Cytochrome b6-f complex iron-sulfur subunit.